Reading from the N-terminus, the 488-residue chain is Signal recognition particle receptor FtsY (488 aa).

The interval 14–82 (DTAPEDVSKP…AVPDDAVHGG (69 aa)) is disordered. The span at 32 to 67 (VGTSSTGSPVGTGAAMPAAQDAPSPAAPHAIATPDD) shows a compositional bias: low complexity. Residues 287–294 (GVNGVGKT), 369–373 (DTAGR), and 433–436 (TKLD) each bind GTP.

Belongs to the GTP-binding SRP family. FtsY subfamily. Part of the signal recognition particle protein translocation system, which is composed of SRP and FtsY. SRP is a ribonucleoprotein composed of Ffh and a 4.5S RNA molecule.

The protein resides in the cell inner membrane. The protein localises to the cytoplasm. It carries out the reaction GTP + H2O = GDP + phosphate + H(+). In terms of biological role, involved in targeting and insertion of nascent membrane proteins into the cytoplasmic membrane. Acts as a receptor for the complex formed by the signal recognition particle (SRP) and the ribosome-nascent chain (RNC). Interaction with SRP-RNC leads to the transfer of the RNC complex to the Sec translocase for insertion into the membrane, the hydrolysis of GTP by both Ffh and FtsY, and the dissociation of the SRP-FtsY complex into the individual components. This chain is Signal recognition particle receptor FtsY, found in Nitratidesulfovibrio vulgaris (strain ATCC 29579 / DSM 644 / CCUG 34227 / NCIMB 8303 / VKM B-1760 / Hildenborough) (Desulfovibrio vulgaris).